The primary structure comprises 589 residues: Transcription factor atf-6 homolog (589 aa).

Over residues 1 to 16 (MNFDNTVHESNFDDLL) the composition is skewed to basic and acidic residues. A disordered region spans residues 1–82 (MNFDNTVHES…SSPPLSCANF (82 aa)). 2 stretches are compositionally biased toward low complexity: residues 36 to 54 (GTDE…FSDQ) and 67 to 78 (GDSSSDSSPPLS). The region spanning 250–299 (QNRKIRNRMYAQASRMRKKEADEHMKMNLQELLQENEILRTENAALKQRL) is the bZIP domain. A basic motif region spans residues 252-275 (RKIRNRMYAQASRMRKKEADEHMK). The stretch at 271 to 305 (DEHMKMNLQELLQENEILRTENAALKQRLAFFEHE) forms a coiled coil. The segment at 281–295 (LLQENEILRTENAAL) is leucine-zipper. A helical transmembrane segment spans residues 324–344 (IIAAGSVLMMFGLFAVISPFN).

Belongs to the bZIP family. ATF subfamily.

The protein localises to the nucleus. Its subcellular location is the membrane. Functionally, transcription factor. Plays a role in the unfolded protein response (UPR), perhaps mainly during constitutive endoplasmic reticulum (ER) stress, by activating transcription of genes involved in the UPR. Plays a role in modulating lifespan, acting by positively regulating expression of calcium-binding chaperone crt-1, thereby influencing ER calcium homeostasis. By activating the UPR pathway, confers adaptive protection to subsequent exposure to hypoxia. Involved in protection against proteotoxicity, probably acting via the UPR. Probably acts in the UPR in parallel with the ire-1-xbp-1 and pek-1 pathways. May be regulated by endopeptidase S2P-mediated proteolytic cleavage. This is Transcription factor atf-6 homolog from Caenorhabditis elegans.